The chain runs to 429 residues: Multifunctional CCA protein (429 aa).

The ATP site is built by Gly27 and Arg30. Positions 27 and 30 each coordinate CTP. The Mg(2+) site is built by Asp40 and Asp42. ATP-binding residues include Arg110, Arg162, and Arg165. Residues Arg110, Arg162, and Arg165 each coordinate CTP. The 102-residue stretch at 251-352 (TGVHTMMVVD…VRLLERCDAL (102 aa)) folds into the HD domain.

It belongs to the tRNA nucleotidyltransferase/poly(A) polymerase family. Bacterial CCA-adding enzyme type 1 subfamily. In terms of assembly, monomer. Can also form homodimers and oligomers. Requires Mg(2+) as cofactor. The cofactor is Ni(2+).

The enzyme catalyses a tRNA precursor + 2 CTP + ATP = a tRNA with a 3' CCA end + 3 diphosphate. It carries out the reaction a tRNA with a 3' CCA end + 2 CTP + ATP = a tRNA with a 3' CCACCA end + 3 diphosphate. In terms of biological role, catalyzes the addition and repair of the essential 3'-terminal CCA sequence in tRNAs without using a nucleic acid template. Adds these three nucleotides in the order of C, C, and A to the tRNA nucleotide-73, using CTP and ATP as substrates and producing inorganic pyrophosphate. tRNA 3'-terminal CCA addition is required both for tRNA processing and repair. Also involved in tRNA surveillance by mediating tandem CCA addition to generate a CCACCA at the 3' terminus of unstable tRNAs. While stable tRNAs receive only 3'-terminal CCA, unstable tRNAs are marked with CCACCA and rapidly degraded. The sequence is that of Multifunctional CCA protein from Ralstonia nicotianae (strain ATCC BAA-1114 / GMI1000) (Ralstonia solanacearum).